A 350-amino-acid chain; its full sequence is S-adenosylmethionine:tRNA ribosyltransferase-isomerase (350 aa).

This sequence belongs to the QueA family. In terms of assembly, monomer.

It is found in the cytoplasm. The enzyme catalyses 7-aminomethyl-7-carbaguanosine(34) in tRNA + S-adenosyl-L-methionine = epoxyqueuosine(34) in tRNA + adenine + L-methionine + 2 H(+). The protein operates within tRNA modification; tRNA-queuosine biosynthesis. Its function is as follows. Transfers and isomerizes the ribose moiety from AdoMet to the 7-aminomethyl group of 7-deazaguanine (preQ1-tRNA) to give epoxyqueuosine (oQ-tRNA). This chain is S-adenosylmethionine:tRNA ribosyltransferase-isomerase, found in Bacillus cytotoxicus (strain DSM 22905 / CIP 110041 / 391-98 / NVH 391-98).